Reading from the N-terminus, the 205-residue chain is Heme-binding protein 2 (205 aa).

A disordered region spans residues 1–37 (MAEEPEPDLGVAEGSEDQALEMPSWKAPEDIDPQPGS). An N-acetylalanine modification is found at A2. S181 is modified (phosphoserine).

The protein belongs to the HEBP family. In terms of assembly, monomer. Interacts with LRPPRC. May interact with BCL2L1; an interaction with BCL2L1 was observed using a peptide, but not with the full-length protein. The full-length protein would have to undergo a major conformation change for the interaction to occur. Interacts with PDCD6.

Its subcellular location is the cytoplasm. It is found in the mitochondrion. Can promote mitochondrial permeability transition and facilitate necrotic cell death under different types of stress conditions. May have low affinity for heme. This chain is Heme-binding protein 2 (Hebp2), found in Mus musculus (Mouse).